The sequence spans 296 residues: Formamidopyrimidine-DNA glycosylase (296 aa).

Pro2 functions as the Schiff-base intermediate with DNA in the catalytic mechanism. The active-site Proton donor is the Glu3. Lys58 (proton donor; for beta-elimination activity) is an active-site residue. Residues His104, Arg126, and Lys169 each coordinate DNA. The segment at Ser260–Lys296 adopts an FPG-type zinc-finger fold. Residue Arg286 is the Proton donor; for delta-elimination activity of the active site.

Belongs to the FPG family. As to quaternary structure, monomer. The cofactor is Zn(2+).

The enzyme catalyses Hydrolysis of DNA containing ring-opened 7-methylguanine residues, releasing 2,6-diamino-4-hydroxy-5-(N-methyl)formamidopyrimidine.. It catalyses the reaction 2'-deoxyribonucleotide-(2'-deoxyribose 5'-phosphate)-2'-deoxyribonucleotide-DNA = a 3'-end 2'-deoxyribonucleotide-(2,3-dehydro-2,3-deoxyribose 5'-phosphate)-DNA + a 5'-end 5'-phospho-2'-deoxyribonucleoside-DNA + H(+). In terms of biological role, involved in base excision repair of DNA damaged by oxidation or by mutagenic agents. Acts as a DNA glycosylase that recognizes and removes damaged bases. Has a preference for oxidized purines, such as 7,8-dihydro-8-oxoguanine (8-oxoG). Has AP (apurinic/apyrimidinic) lyase activity and introduces nicks in the DNA strand. Cleaves the DNA backbone by beta-delta elimination to generate a single-strand break at the site of the removed base with both 3'- and 5'-phosphates. In Sinorhizobium fredii (strain NBRC 101917 / NGR234), this protein is Formamidopyrimidine-DNA glycosylase.